We begin with the raw amino-acid sequence, 329 residues long: Lipoyl synthase (329 aa).

The [4Fe-4S] cluster site is built by Cys72, Cys77, Cys83, Cys98, Cys102, Cys105, and Ser313. The Radical SAM core domain occupies 83 to 303; it reads CWSHGTATIM…QIGLKKGFFE (221 aa).

Belongs to the radical SAM superfamily. Lipoyl synthase family. Requires [4Fe-4S] cluster as cofactor.

It localises to the cytoplasm. The enzyme catalyses [[Fe-S] cluster scaffold protein carrying a second [4Fe-4S](2+) cluster] + N(6)-octanoyl-L-lysyl-[protein] + 2 oxidized [2Fe-2S]-[ferredoxin] + 2 S-adenosyl-L-methionine + 4 H(+) = [[Fe-S] cluster scaffold protein] + N(6)-[(R)-dihydrolipoyl]-L-lysyl-[protein] + 4 Fe(3+) + 2 hydrogen sulfide + 2 5'-deoxyadenosine + 2 L-methionine + 2 reduced [2Fe-2S]-[ferredoxin]. The protein operates within protein modification; protein lipoylation via endogenous pathway; protein N(6)-(lipoyl)lysine from octanoyl-[acyl-carrier-protein]: step 2/2. Functionally, catalyzes the radical-mediated insertion of two sulfur atoms into the C-6 and C-8 positions of the octanoyl moiety bound to the lipoyl domains of lipoate-dependent enzymes, thereby converting the octanoylated domains into lipoylated derivatives. This Legionella pneumophila (strain Corby) protein is Lipoyl synthase.